The chain runs to 843 residues: F-box only protein 11 (843 aa).

Residues 1 to 63 form a disordered region; the sequence is MVAEESGPGA…RVSGKSQDLS (63 aa). Positions 30 to 45 are enriched in polar residues; that stretch reads PTKNSMEGASTSTTEN. One can recognise an F-box domain in the interval 69 to 115; it reads QYLQEKLPDEVVLKIFSYLLEQDLCRAACVCKRFSELANDPILWKRL. 19 PbH1 repeats span residues 311-333, 334-356, 357-379, 380-402, 403-425, 426-448, 449-471, 472-494, 495-517, 518-540, 541-563, 564-586, 587-609, 610-632, 633-655, 656-678, 679-701, 702-724, and 725-746; these read GACPTIKHCNISDCENVGLYITD, HAQGIYEDNEISNNALAGIWVKN, HGNPIIRRNHIHHGRDVGVFTFD, HGMGYFESCNIHRNRIAGFEVKA, YANPTVVRCEIHHGQTGGIYVHE, KGRGQFIENKIYANNFAGVWITS, NSDPTIRGNSIFNGNQGGVYIFG, DGRGLIEGNDIYGNALAGIQIRT, NSCPIVRHNKIHDGQHGGIYVHE, KGQGVIEENEVYSNTLAGVWVTT, GSTPVLRRNRIHSGKQVGVYFYD, NGHGVLEDNDIYNHMYSGVQIRT, GSNPKIRRNKIWGGQNGGILVYN, SGLGCIEDNEIFDNAMAGVWIKT, DSNPTLRRNKIHDGRDGGICIFN, GGRGLLEENDIFRNAQAGVLIST, NSHPVLRKNRIFDGFAAGIEITN, HATATLEGNQIFNNRFGGLFLAS, and GVNVTMKDNKIMNNQDAIEKAV. The UBR-type zinc finger occupies 749-820; it reads GQCLYKISSY…LSNPCTLAGE (72 aa).

In terms of assembly, component of the SCF(FBXO11) complex consisting of CUL1, RBX1, SKP1 and FBXO11. Interacts with CIITA.

It is found in the nucleus. The protein localises to the chromosome. Its pathway is protein modification; protein ubiquitination. Substrate recognition component of a SCF (SKP1-CUL1-F-box protein) E3 ubiquitin-protein ligase complex which mediates the ubiquitination and subsequent proteasomal degradation of target proteins, such as DTL/CDT2, BCL6, SNAI1 and PRDM1/BLIMP1. The SCF(FBXO11) complex mediates ubiquitination and degradation of BCL6, thereby playing a role in the germinal center B-cells terminal differentiation toward memory B-cells and plasma cells. The SCF(FBXO11) complex also mediates ubiquitination and degradation of DTL, an important step for the regulation of TGF-beta signaling, cell migration and the timing of the cell-cycle progression and exit. The SCF(FBXO11) complex also catalyzes ubiquitination and degradation of GSK3B-phosphorylated SNAI1. Binds to and neddylates phosphorylated p53/TP53, inhibiting its transcriptional activity. Plays a role in the regulatiom of erythropoiesis but not myelopoiesis or megakaryopoiesis. Mechanistically, activates erythroid genes by mediating the degradation of BAHD1, a heterochromatin-associated protein that recruits corepressors to H3K27me3 marks. Participates in macrophage cell death and inflammation in response to bacterial toxins by regulating the expression of complement 5a receptor 1/C5AR1 and IL-1beta. Acts as a critical regulator to determine the level of MHC-II by mediating the recognition of degron at the P/S/T domain of CIITA leading to its ubiquitination and subsequent degradation via the proteasome. Participates in the antiviral repsonse by initiating the activation of TBK1-IRF3-IFN-I axis. Mediates the 'Lys-63'-linked ubiquitination of TRAF3 to strengthen the interaction between TRAF3 and TBK1. The sequence is that of F-box only protein 11 (Fbxo11) from Rattus norvegicus (Rat).